The following is a 210-amino-acid chain: 3-hexulose-6-phosphate synthase (210 aa).

It belongs to the HPS/KGPDC family. HPS subfamily.

It catalyses the reaction D-ribulose 5-phosphate + formaldehyde = D-arabino-hex-3-ulose 6-phosphate. Its pathway is one-carbon metabolism; formaldehyde assimilation via RuMP pathway; D-fructose 6-phosphate from D-ribulose 5-phosphate and formaldehyde: step 1/2. Its function is as follows. Catalyzes the condensation of ribulose 5-phosphate with formaldehyde to form 3-hexulose 6-phosphate. In Staphylococcus aureus (strain bovine RF122 / ET3-1), this protein is 3-hexulose-6-phosphate synthase.